The primary structure comprises 373 residues: Chaperone protein DnaJ (373 aa).

The J domain maps to Asp5–Gly70. The CR-type zinc-finger motif lies at Gly134–Val212. Residues Cys147, Cys150, Cys164, Cys167, Cys186, Cys189, Cys200, and Cys203 each contribute to the Zn(2+) site. CXXCXGXG motif repeat units follow at residues Cys147 to Gly154, Cys164 to Gly171, Cys186 to Gly193, and Cys200 to Gly207.

It belongs to the DnaJ family. Homodimer. The cofactor is Zn(2+).

The protein localises to the cytoplasm. Participates actively in the response to hyperosmotic and heat shock by preventing the aggregation of stress-denatured proteins and by disaggregating proteins, also in an autonomous, DnaK-independent fashion. Unfolded proteins bind initially to DnaJ; upon interaction with the DnaJ-bound protein, DnaK hydrolyzes its bound ATP, resulting in the formation of a stable complex. GrpE releases ADP from DnaK; ATP binding to DnaK triggers the release of the substrate protein, thus completing the reaction cycle. Several rounds of ATP-dependent interactions between DnaJ, DnaK and GrpE are required for fully efficient folding. Also involved, together with DnaK and GrpE, in the DNA replication of plasmids through activation of initiation proteins. The chain is Chaperone protein DnaJ from Neisseria gonorrhoeae (strain ATCC 700825 / FA 1090).